The sequence spans 474 residues: Probable fucosyltransferase 9 (474 aa).

Residues 1–21 form a helical; Signal-anchor for type II membrane protein membrane-spanning segment; the sequence is MIKLTIAIATCLVLCLVLLLP. Over 22 to 474 the chain is Lumenal; the sequence is SSNISYRHKY…LKLVDVSDEL (453 aa). Residues N24, N39, and N208 are each glycosylated (N-linked (GlcNAc...) asparagine).

This sequence belongs to the glycosyltransferase 37 family. In terms of tissue distribution, expressed in leaves and stems.

Its subcellular location is the golgi apparatus. The protein resides in the golgi stack membrane. Its pathway is protein modification; protein glycosylation. In terms of biological role, may be involved in cell wall biosynthesis. May act as a fucosyltransferase. In Arabidopsis thaliana (Mouse-ear cress), this protein is Probable fucosyltransferase 9 (FUT9).